We begin with the raw amino-acid sequence, 1793 residues long: uncharacterized protein (1793 aa).

Disordered stretches follow at residues 156-189 (ARQA…ASSQ), 204-362 (QRES…PPKV), and 407-505 (ASFG…SGAA). A compositionally biased stretch (polar residues) spans 166–175 (SSAQDSQELK). Residues 227 to 237 (SPKEKAQDEPS) show a composition bias toward basic and acidic residues. The segment covering 238-247 (SKTPSPQNNP) has biased composition (polar residues). Low complexity predominate over residues 248 to 258 (ASSQLSRSQHS). Residues 277–288 (KAEEDGLSKMED) show a composition bias toward basic and acidic residues. Residues 289 to 307 (STTSTGALATSSSSLGFES) show a composition bias toward low complexity. A compositionally biased stretch (gly residues) spans 317–342 (AVGGEGEKISGGGGGGKGGGGGGAGD). Residues 434–450 (STTPSTNTTRTPSPTSS) are compositionally biased toward low complexity. A compositionally biased stretch (polar residues) spans 463–476 (DTSSTEVGSGPSDS). The span at 485 to 505 (PGTAPLTEPLPETPEAASGAA) shows a compositional bias: low complexity. Threonine 733 bears the Phosphothreonine mark. Disordered regions lie at residues 757–809 (RSES…SKFA), 829–917 (MERG…FTDG), 1090–1147 (RDIR…GSGS), 1161–1187 (QRED…NSSS), 1229–1249 (QKTP…ATKP), 1408–1465 (TGGV…KSNS), and 1482–1567 (GELL…PLPF). 2 stretches are compositionally biased toward basic and acidic residues: residues 829 to 839 (MERGEVMDTSH) and 846 to 872 (KETE…HSEA). A compositionally biased stretch (low complexity) spans 1113-1123 (KGSGDSSDKGS). Residues 1161–1174 (QREDSMDREPRESM) show a composition bias toward basic and acidic residues. Serine 1187 carries the post-translational modification Phosphoserine. The span at 1231–1246 (TPEKLKEEEVKEEGKA) shows a compositional bias: basic and acidic residues. Residues 1513-1528 (SQVPSSSKGSQVSGTS) show a composition bias toward low complexity. The span at 1546 to 1555 (PPGPQSPEHP) shows a compositional bias: pro residues. Position 1774 is an omega-N-methylarginine (arginine 1774).

As to expression, expressed in muscle, heart, kidney and liver but barely detectable in lung, pancreas and brain. In liver veins, expressed in hepatic vein, extrahepatic portal vein and intrahepatic portal vein.

This is an uncharacterized protein from Homo sapiens (Human).